The sequence spans 286 residues: Glucose import system permease protein GlcT (286 aa).

6 helical membrane-spanning segments follow: residues 6–26, 71–91, 103–123, 154–174, 199–219, and 260–280; these read TIIL…LVIW, VILV…LYFL, IVIY…LWLF, LVLV…LAGF, ILIP…FLFS, and VATM…LTVI. Positions 63-275 constitute an ABC transmembrane type-1 domain; that stretch reads LLHSIELSVI…LIATIIIIPY (213 aa).

The protein belongs to the binding-protein-dependent transport system permease family. The complex is composed of two ATP-binding proteins (GlcV), two transmembrane proteins (GlcT and GlcU) and a solute-binding protein (GlcS).

The protein localises to the cell membrane. Its function is as follows. Part of the ABC transporter complex GlcSTUV involved in glucose uptake. Responsible for the translocation of the substrate across the membrane. The polypeptide is Glucose import system permease protein GlcT (Saccharolobus solfataricus (strain ATCC 35092 / DSM 1617 / JCM 11322 / P2) (Sulfolobus solfataricus)).